Consider the following 413-residue polypeptide: Serine hydroxymethyltransferase (413 aa).

Residues leucine 119 and 123 to 125 (GHL) each bind (6S)-5,6,7,8-tetrahydrofolate. The residue at position 228 (lysine 228) is an N6-(pyridoxal phosphate)lysine.

The protein belongs to the SHMT family. As to quaternary structure, homodimer. It depends on pyridoxal 5'-phosphate as a cofactor.

It localises to the cytoplasm. The enzyme catalyses (6R)-5,10-methylene-5,6,7,8-tetrahydrofolate + glycine + H2O = (6S)-5,6,7,8-tetrahydrofolate + L-serine. It participates in one-carbon metabolism; tetrahydrofolate interconversion. The protein operates within amino-acid biosynthesis; glycine biosynthesis; glycine from L-serine: step 1/1. Its function is as follows. Catalyzes the reversible interconversion of serine and glycine with tetrahydrofolate (THF) serving as the one-carbon carrier. This reaction serves as the major source of one-carbon groups required for the biosynthesis of purines, thymidylate, methionine, and other important biomolecules. Also exhibits THF-independent aldolase activity toward beta-hydroxyamino acids, producing glycine and aldehydes, via a retro-aldol mechanism. The polypeptide is Serine hydroxymethyltransferase (Desulfatibacillum aliphaticivorans).